We begin with the raw amino-acid sequence, 336 residues long: MSEMYSAPVTVLGAGSYGTALAIALARNGHKTYLWGHQPEKMAVLATERMNNAFLPDIAFPDALEIESDLVQAIAKVRDILIVVPSHVFADVLTQIKPLLNAHHRIMWATKGLERNTGRLLQTVAQEILGNQYPLAVLSGPTFAKELAQGLPTAIALSSTDSQFADEMQQRIHCSKAFRVYLNNDMIGVQLGGAIKNVIAIGAGISDGMGFGANARTALITRGLAEISRLGASLGANSNTFMGMAGLGDLVLTCTDNQSRNRRFGLMLGQGKSAEEAMAEIGQVVEGFYNTKEAYLLAQTQGVEMPIVEQIYQMLFCGKNAHDVATSLLGRERKGE.

NADPH contacts are provided by Ser-16, Tyr-17, His-37, and Lys-111. 3 residues coordinate sn-glycerol 3-phosphate: Lys-111, Gly-140, and Thr-142. Residue Ala-144 participates in NADPH binding. Sn-glycerol 3-phosphate contacts are provided by Lys-196, Asp-249, Ser-259, Arg-260, and Asn-261. Lys-196 (proton acceptor) is an active-site residue. Residue Arg-260 coordinates NADPH. NADPH contacts are provided by Val-284 and Glu-286.

The protein belongs to the NAD-dependent glycerol-3-phosphate dehydrogenase family.

It localises to the cytoplasm. The catalysed reaction is sn-glycerol 3-phosphate + NAD(+) = dihydroxyacetone phosphate + NADH + H(+). It carries out the reaction sn-glycerol 3-phosphate + NADP(+) = dihydroxyacetone phosphate + NADPH + H(+). The protein operates within membrane lipid metabolism; glycerophospholipid metabolism. In terms of biological role, catalyzes the reduction of the glycolytic intermediate dihydroxyacetone phosphate (DHAP) to sn-glycerol 3-phosphate (G3P), the key precursor for phospholipid synthesis. This chain is Glycerol-3-phosphate dehydrogenase [NAD(P)+], found in Actinobacillus pleuropneumoniae serotype 3 (strain JL03).